Here is an 85-residue protein sequence, read N- to C-terminus: Putative membrane protein insertion efficiency factor (85 aa).

The interval proline 66–histidine 85 is disordered.

This sequence belongs to the UPF0161 family.

The protein localises to the cell inner membrane. Could be involved in insertion of integral membrane proteins into the membrane. The protein is Putative membrane protein insertion efficiency factor of Yersinia pestis bv. Antiqua (strain Antiqua).